A 350-amino-acid chain; its full sequence is Uroporphyrinogen decarboxylase (350 aa).

Substrate contacts are provided by residues 28 to 32, Asp-78, Tyr-155, Ser-210, and His-325; that span reads RQAGR.

Belongs to the uroporphyrinogen decarboxylase family. As to quaternary structure, homodimer.

It is found in the cytoplasm. It carries out the reaction uroporphyrinogen III + 4 H(+) = coproporphyrinogen III + 4 CO2. It participates in porphyrin-containing compound metabolism; protoporphyrin-IX biosynthesis; coproporphyrinogen-III from 5-aminolevulinate: step 4/4. Functionally, catalyzes the decarboxylation of four acetate groups of uroporphyrinogen-III to yield coproporphyrinogen-III. In Microcystis aeruginosa (strain NIES-843 / IAM M-2473), this protein is Uroporphyrinogen decarboxylase.